Consider the following 149-residue polypeptide: UPF0179 protein Mbar_A0292 (149 aa).

This sequence belongs to the UPF0179 family.

The protein is UPF0179 protein Mbar_A0292 of Methanosarcina barkeri (strain Fusaro / DSM 804).